The following is a 490-amino-acid chain: Betaine aldehyde dehydrogenase (490 aa).

3 residues coordinate K(+): serine 26, isoleucine 27, and aspartate 93. 150–152 (GAW) serves as a coordination point for NAD(+). The Charge relay system role is filled by lysine 162. NAD(+)-binding positions include 176-179 (KPSE) and 230-233 (GVET). K(+) is bound at residue leucine 246. The Proton acceptor role is filled by glutamate 252. NAD(+)-binding residues include glycine 254, cysteine 286, and glutamate 387. The active-site Nucleophile is cysteine 286. Position 286 is a cysteine sulfenic acid (-SOH) (cysteine 286). Positions 457 and 460 each coordinate K(+). Residue glutamate 464 is the Charge relay system of the active site.

This sequence belongs to the aldehyde dehydrogenase family. In terms of assembly, dimer of dimers. It depends on K(+) as a cofactor.

The enzyme catalyses betaine aldehyde + NAD(+) + H2O = glycine betaine + NADH + 2 H(+). The protein operates within amine and polyamine biosynthesis; betaine biosynthesis via choline pathway; betaine from betaine aldehyde: step 1/1. Functionally, involved in the biosynthesis of the osmoprotectant glycine betaine. Catalyzes the irreversible oxidation of betaine aldehyde to the corresponding acid. This Acinetobacter baumannii (strain AB307-0294) protein is Betaine aldehyde dehydrogenase.